We begin with the raw amino-acid sequence, 456 residues long: MFKTLYTRIAIYTITVILFSALVSFLFANVYYHFNLKAHNDAKIMRTLKEARAFHTSSNQSDTQSYFKHLGDMNYQIMIVDHSYHKTFFGEPFRKDTISDSAINQVLKGKAYHGIKNKPFELFITGFFDNETDNTVGIPFNQNNQKLAVFMRPDIGETFSEFRTFLAVLLICLLGISITLVIASTYSIIKPIKILKQATERLMHGDFNSPIYQSRHDEIGTLQYRFEAMRQSLKQVDDMRQHFVQNVSHEIKTPLTHIHRLLSTLQSNVNQGERDQIIHEIHEEVTHLSNLTKELLLLSELDNATHLKFEDDVHFKELITDIIRHEQYGIDNKQLMLMSDIDTVHFRGNNRLLHQACSNLIQNAIKYSNPNSMIDVNLFNNEGTIYFTVTNEGHTIPESVQPHLFDRFYKRNAEDNSNGLGLAITQSIIHLHRGQISVTSNDRDGTTFTVTLPETN.

2 helical membrane-spanning segments follow: residues 9–29 (IAIY…LFAN) and 164–184 (TFLA…VIAS). Residues 186-238 (YSIIKPIKILKQATERLMHGDFNSPIYQSRHDEIGTLQYRFEAMRQSLKQVDD) form the HAMP domain. The Histidine kinase domain maps to 246–456 (NVSHEIKTPL…TFTVTLPETN (211 aa)). Histidine 249 carries the post-translational modification Phosphohistidine; by autocatalysis.

Post-translationally, autophosphorylated.

The protein localises to the cell membrane. It carries out the reaction ATP + protein L-histidine = ADP + protein N-phospho-L-histidine.. Functionally, member of the two-component regulatory system HssS/HssR involved in intracellular heme homeostasis and tempering of staphylococcal virulence. HssS functions as a heme sensor histidine kinase which is autophosphorylated at a histidine residue and transfers its phosphate group to an aspartate residue of HssR. HssR/HssS activates the expression of hrtAB, an efflux pump, in response to extracellular heme, hemin, hemoglobin or blood. This chain is Heme sensor protein HssS (hssS), found in Staphylococcus haemolyticus (strain JCSC1435).